Consider the following 98-residue polypeptide: NADH-ubiquinone oxidoreductase chain 4L (98 aa).

The next 3 helical transmembrane spans lie at 2-22 (SPIY…TLLF), 26-46 (LMST…MVTS), and 61-81 (ITML…LVMI).

Belongs to the complex I subunit 4L family. In terms of assembly, core subunit of respiratory chain NADH dehydrogenase (Complex I) which is composed of 45 different subunits.

The protein resides in the mitochondrion inner membrane. The catalysed reaction is a ubiquinone + NADH + 5 H(+)(in) = a ubiquinol + NAD(+) + 4 H(+)(out). In terms of biological role, core subunit of the mitochondrial membrane respiratory chain NADH dehydrogenase (Complex I) which catalyzes electron transfer from NADH through the respiratory chain, using ubiquinone as an electron acceptor. Part of the enzyme membrane arm which is embedded in the lipid bilayer and involved in proton translocation. This Nephelomys albigularis (Tomes's rice rat) protein is NADH-ubiquinone oxidoreductase chain 4L (MT-ND4L).